The chain runs to 396 residues: Elongation factor Tu (396 aa).

Residues 10–206 (KPHVNIGTIG…AVDAYIPEPE (197 aa)) form the tr-type G domain. The tract at residues 19 to 26 (GHVDHGKT) is G1. 19 to 26 (GHVDHGKT) provides a ligand contact to GTP. Threonine 26 lines the Mg(2+) pocket. Residues 60–64 (GITIS) are G2. The tract at residues 81-84 (DCPG) is G3. Residues 81–85 (DCPGH) and 136–139 (NKVD) each bind GTP. The segment at 136 to 139 (NKVD) is G4. The tract at residues 174–176 (SAL) is G5.

The protein belongs to the TRAFAC class translation factor GTPase superfamily. Classic translation factor GTPase family. EF-Tu/EF-1A subfamily. As to quaternary structure, monomer.

It localises to the cytoplasm. It carries out the reaction GTP + H2O = GDP + phosphate + H(+). Its function is as follows. GTP hydrolase that promotes the GTP-dependent binding of aminoacyl-tRNA to the A-site of ribosomes during protein biosynthesis. The polypeptide is Elongation factor Tu (Magnetococcus marinus (strain ATCC BAA-1437 / JCM 17883 / MC-1)).